Here is a 403-residue protein sequence, read N- to C-terminus: Arginine biosynthesis bifunctional protein ArgJ (403 aa).

Substrate-binding residues include T149, K175, T186, E272, N398, and T403. T186 acts as the Nucleophile in catalysis.

It belongs to the ArgJ family. As to quaternary structure, heterotetramer of two alpha and two beta chains.

The protein localises to the cytoplasm. The enzyme catalyses N(2)-acetyl-L-ornithine + L-glutamate = N-acetyl-L-glutamate + L-ornithine. The catalysed reaction is L-glutamate + acetyl-CoA = N-acetyl-L-glutamate + CoA + H(+). Its pathway is amino-acid biosynthesis; L-arginine biosynthesis; L-ornithine and N-acetyl-L-glutamate from L-glutamate and N(2)-acetyl-L-ornithine (cyclic): step 1/1. It participates in amino-acid biosynthesis; L-arginine biosynthesis; N(2)-acetyl-L-ornithine from L-glutamate: step 1/4. In terms of biological role, catalyzes two activities which are involved in the cyclic version of arginine biosynthesis: the synthesis of N-acetylglutamate from glutamate and acetyl-CoA as the acetyl donor, and of ornithine by transacetylation between N(2)-acetylornithine and glutamate. The polypeptide is Arginine biosynthesis bifunctional protein ArgJ (Caldanaerobacter subterraneus subsp. tengcongensis (strain DSM 15242 / JCM 11007 / NBRC 100824 / MB4) (Thermoanaerobacter tengcongensis)).